The primary structure comprises 582 residues: 2-succinyl-5-enolpyruvyl-6-hydroxy-3-cyclohexene-1-carboxylate synthase (582 aa).

This sequence belongs to the TPP enzyme family. MenD subfamily. Homodimer. It depends on Mg(2+) as a cofactor. Mn(2+) is required as a cofactor. The cofactor is thiamine diphosphate.

The enzyme catalyses isochorismate + 2-oxoglutarate + H(+) = 5-enolpyruvoyl-6-hydroxy-2-succinyl-cyclohex-3-ene-1-carboxylate + CO2. The protein operates within quinol/quinone metabolism; 1,4-dihydroxy-2-naphthoate biosynthesis; 1,4-dihydroxy-2-naphthoate from chorismate: step 2/7. It participates in quinol/quinone metabolism; menaquinone biosynthesis. In terms of biological role, catalyzes the thiamine diphosphate-dependent decarboxylation of 2-oxoglutarate and the subsequent addition of the resulting succinic semialdehyde-thiamine pyrophosphate anion to isochorismate to yield 2-succinyl-5-enolpyruvyl-6-hydroxy-3-cyclohexene-1-carboxylate (SEPHCHC). The polypeptide is 2-succinyl-5-enolpyruvyl-6-hydroxy-3-cyclohexene-1-carboxylate synthase (Chlorobaculum tepidum (strain ATCC 49652 / DSM 12025 / NBRC 103806 / TLS) (Chlorobium tepidum)).